The following is a 140-amino-acid chain: Nucleoside diphosphate kinase (140 aa).

The ATP site is built by Lys-11, Phe-59, Arg-87, Thr-93, Arg-104, and Asn-114. Catalysis depends on His-117, which acts as the Pros-phosphohistidine intermediate.

This sequence belongs to the NDK family. In terms of assembly, homotetramer. Mg(2+) serves as cofactor.

The protein resides in the cytoplasm. It carries out the reaction a 2'-deoxyribonucleoside 5'-diphosphate + ATP = a 2'-deoxyribonucleoside 5'-triphosphate + ADP. The catalysed reaction is a ribonucleoside 5'-diphosphate + ATP = a ribonucleoside 5'-triphosphate + ADP. In terms of biological role, major role in the synthesis of nucleoside triphosphates other than ATP. The ATP gamma phosphate is transferred to the NDP beta phosphate via a ping-pong mechanism, using a phosphorylated active-site intermediate. This Agrobacterium fabrum (strain C58 / ATCC 33970) (Agrobacterium tumefaciens (strain C58)) protein is Nucleoside diphosphate kinase.